Reading from the N-terminus, the 296-residue chain is Ceramide synthase LOH2 (296 aa).

6 helical membrane passes run 19 to 39 (VWHF…RLVL), 80 to 100 (LLYY…EPWA), 121 to 141 (LYYM…LAWE), 158 to 178 (IILL…IILA), 206 to 226 (FALF…FWII), and 254 to 274 (MLLM…AMIV). A TLC domain is found at 71-278 (VKCKESLWKL…ICAMIVRLLK (208 aa)). Phosphoserine occurs at positions 289 and 291.

As to expression, expressed ubiquitously with highest levels in pollen.

Its subcellular location is the endoplasmic reticulum membrane. The catalysed reaction is a sphingoid base + hexadecanoyl-CoA = an N-hexadecanoyl-sphingoid base + CoA + H(+). It carries out the reaction sphinganine + hexadecanoyl-CoA = N-hexadecanoylsphinganine + CoA + H(+). It catalyses the reaction sphing-4-enine + hexadecanoyl-CoA = N-hexadecanoylsphing-4-enine + CoA + H(+). The enzyme catalyses sphinga-(4E,8E)-dienine + hexadecanoyl-CoA = N-hexadecanoylsphinga-(4E,8E)-dienine + CoA + H(+). The catalysed reaction is sphinga-(4E,8Z)-dienine + hexadecanoyl-CoA = N-hexadecanoylsphinga-(4E,8Z)-dienine + CoA + H(+). The protein operates within sphingolipid metabolism. Its activity is regulated as follows. Inhibited by the mycotoxin fumonisin B(1), a sphingosine analog mycotoxins produced by pathogenic fungi. Activated by divalent cation such as magnesium Mg(2+), zinc Zn(2+), manganese Mn(2+) and calcium Ca(2+). In terms of biological role, prevents cell division in root meristems and promotes salicylic acid (SA) production and hypersensitive response (HR). Catalyzes the biosynthesis of ceramide sphingolipids with C(16) fatty acids, structural membrane lipids involved in membrane trafficking (e.g. early endosomes) and cell polarity (e.g. polar auxin transport related proteins); accepts only C16:0 fatty acids, but with a wide range of d18 sphingoid bases, such as sphinganine (d18:0) and palmitoyl-CoA. Mediates resistance to sphinganine-analog mycotoxins (SAMs, e.g. fumonisin B(1)) by restoring the sphingolipid biosynthesis. Could salvage the transport of GPI-anchored proteins from the endoplasmic reticulum to the Golgi apparatus in ceramides-depleted cells after SAM exposure. Contributes to hypoxic conditions tolerance (e.g. submergences), especially in the dark, by promoting the formation of very-long-chain (VLC) ceramide species (22:1, 24:1 and 26:1) and of VLC unsaturated ceramides, which are modulating CTR1-mediated ethylene signaling leading to endoplasmic reticulum (ER)-to-nucleus translocation of EIN2 and EIN3. The sequence is that of Ceramide synthase LOH2 from Arabidopsis thaliana (Mouse-ear cress).